Here is a 361-residue protein sequence, read N- to C-terminus: Basic helix-loop-helix protein 79 (361 aa).

The disordered stretch occupies residues 66-159 (APEASNGSGS…ASTVTAGQKT (94 aa)). Positions 124–138 (GRPERARPGAKKKAE) are enriched in basic and acidic residues. The segment covering 146-157 (PATSASTVTAGQ) has biased composition (polar residues). Residues 166 to 173 (ARRGQATD) carry the Nuclear localization signal motif. Positions 170–183 (QATDSHSLAERVRR) are basic motif; degenerate. In terms of domain architecture, bHLH spans 170–220 (QATDSHSLAERVRRERISERMRYLQELVPGCNKVTGKAGMLDEIINYVQSL). Residues 184–220 (ERISERMRYLQELVPGCNKVTGKAGMLDEIINYVQSL) are helix-loop-helix motif.

It belongs to the bHLH protein family. Homodimer. Interacts with IBH1.

It localises to the nucleus. In terms of biological role, together with BCL1, positive regulator of cell elongation at least partially through increased gibberellic acid (GA) biosynthesis. The sequence is that of Basic helix-loop-helix protein 79 from Oryza sativa subsp. indica (Rice).